The sequence spans 197 residues: Peptide deformylase (197 aa).

The Fe cation site is built by Cys-106 and His-148. The active site involves Glu-149. Residue His-152 coordinates Fe cation.

The protein belongs to the polypeptide deformylase family. Fe(2+) is required as a cofactor.

The enzyme catalyses N-terminal N-formyl-L-methionyl-[peptide] + H2O = N-terminal L-methionyl-[peptide] + formate. In terms of biological role, removes the formyl group from the N-terminal Met of newly synthesized proteins. Requires at least a dipeptide for an efficient rate of reaction. N-terminal L-methionine is a prerequisite for activity but the enzyme has broad specificity at other positions. This chain is Peptide deformylase, found in Mycobacterium bovis (strain ATCC BAA-935 / AF2122/97).